The following is a 98-amino-acid chain: NADH-ubiquinone oxidoreductase chain 4L (98 aa).

Helical transmembrane passes span 1 to 21 (MSLV…GLLM), 29 to 49 (SLLC…LIIL), and 61 to 81 (IILL…LVMV).

It belongs to the complex I subunit 4L family. Core subunit of respiratory chain NADH dehydrogenase (Complex I) which is composed of 45 different subunits.

The protein localises to the mitochondrion inner membrane. The catalysed reaction is a ubiquinone + NADH + 5 H(+)(in) = a ubiquinol + NAD(+) + 4 H(+)(out). Core subunit of the mitochondrial membrane respiratory chain NADH dehydrogenase (Complex I) which catalyzes electron transfer from NADH through the respiratory chain, using ubiquinone as an electron acceptor. Part of the enzyme membrane arm which is embedded in the lipid bilayer and involved in proton translocation. The sequence is that of NADH-ubiquinone oxidoreductase chain 4L (MT-ND4L) from Hippopotamus amphibius (Hippopotamus).